Here is a 508-residue protein sequence, read N- to C-terminus: MEEFQRYFELNRYQQHNFLYPLIFQEYIAALAHDHGLNRSILLENTGYGNKFSLLSVKRLITQMYQQNHLIISANDSSQNQFFGHNKNLYSQMISEGFAVIVEIPFSLRLRSSLEGKEIVKSQNLQSIHSIFPFLEDKFLHLNYVLDILIPYPIHLEILVQTLRHWVKDASSLHLLRFFLHEYRNWNSLITPKKTSSSFSKRNQRLFFFLYNSHVCEYESIFIFILSQSSHLRSTSSGALLERIYFYGKIEHSVEVFAKDFPSILCLLKDPFIHYLRYQGKSILASKGTPLLMNKWKYYLVNSWQCHFYVWSQSRRIYINQLSNHFLDFLGYLSSVRLNPSMVRSQMLENSFLIDNAIKKFETIVPIIPLIGSLAKAKFCNVLGHPISKPVWADLSDSDIIDRFGRICRNLSHYHSGSSKKKSLYRIKYILRLSCARTLARKHKSTVRAFLKMKRVGSELLEKFFTEEEQVFSLTFPRVSSTSTSRGLYRRRIWYLDIICINDLANHE.

Belongs to the intron maturase 2 family. MatK subfamily.

It is found in the plastid. It localises to the chloroplast. Usually encoded in the trnK tRNA gene intron. Probably assists in splicing its own and other chloroplast group II introns. This chain is Maturase K, found in Huidobria chilensis (Loasa chilensis).